Reading from the N-terminus, the 410-residue chain is Protein king tubby 2 (410 aa).

Residues 48–72 (SPNNPDQILTSTGNASITTTPTSPY) are compositionally biased toward polar residues. 2 disordered regions span residues 48-109 (SPNN…STRH) and 121-159 (ISPA…EGDV). Residues 132 to 143 (SHHDSSSGKSVE) show a composition bias toward basic and acidic residues.

It belongs to the TUB family.

Its subcellular location is the cytoplasm. It is found in the nucleus. The protein is Protein king tubby 2 (king-tubby2) of Aedes aegypti (Yellowfever mosquito).